Consider the following 397-residue polypeptide: Elongation factor Tu (397 aa).

The tr-type G domain occupies 10 to 206 (KPHVNIGTIG…ACDDYIPEPV (197 aa)). The interval 19 to 26 (GHIDHGKT) is G1. 19–26 (GHIDHGKT) is a GTP binding site. A Mg(2+)-binding site is contributed by Thr26. Positions 62–66 (GITIS) are G2. Positions 83 to 86 (DCPG) are G3. Residues 83-87 (DCPGH) and 138-141 (NKAD) contribute to the GTP site. Residues 138–141 (NKAD) form a G4 region. The segment at 176–178 (SAL) is G5.

It belongs to the TRAFAC class translation factor GTPase superfamily. Classic translation factor GTPase family. EF-Tu/EF-1A subfamily. As to quaternary structure, monomer.

Its subcellular location is the cytoplasm. The enzyme catalyses GTP + H2O = GDP + phosphate + H(+). In terms of biological role, GTP hydrolase that promotes the GTP-dependent binding of aminoacyl-tRNA to the A-site of ribosomes during protein biosynthesis. In Acidothermus cellulolyticus (strain ATCC 43068 / DSM 8971 / 11B), this protein is Elongation factor Tu.